The sequence spans 194 residues: ATP-dependent Clp protease proteolytic subunit (194 aa).

Ser-99 functions as the Nucleophile in the catalytic mechanism. His-124 is an active-site residue.

The protein belongs to the peptidase S14 family. Fourteen ClpP subunits assemble into 2 heptameric rings which stack back to back to give a disk-like structure with a central cavity, resembling the structure of eukaryotic proteasomes.

It localises to the cytoplasm. It catalyses the reaction Hydrolysis of proteins to small peptides in the presence of ATP and magnesium. alpha-casein is the usual test substrate. In the absence of ATP, only oligopeptides shorter than five residues are hydrolyzed (such as succinyl-Leu-Tyr-|-NHMec, and Leu-Tyr-Leu-|-Tyr-Trp, in which cleavage of the -Tyr-|-Leu- and -Tyr-|-Trp bonds also occurs).. Its function is as follows. Cleaves peptides in various proteins in a process that requires ATP hydrolysis. Has a chymotrypsin-like activity. Plays a major role in the degradation of misfolded proteins. This Clostridium perfringens (strain ATCC 13124 / DSM 756 / JCM 1290 / NCIMB 6125 / NCTC 8237 / Type A) protein is ATP-dependent Clp protease proteolytic subunit.